The primary structure comprises 753 residues: Nuclear hormone receptor family member daf-12 (753 aa).

The tract at residues Met1–Glu109 is disordered. Over residues Asn20 to Val29 the composition is skewed to basic and acidic residues. Positions Arg30–Ser44 are enriched in basic residues. The segment at residues Gln115–Asn190 is a DNA-binding region (nuclear receptor). 2 NR C4-type zinc fingers span residues Cys118 to Cys138 and Cys154 to Cys173. A Nuclear localization signal motif is present at residues Glu191 to Gly206. Disordered stretches follow at residues Lys198 to Pro251, Asn266 to Pro314, and Gly376 to His410. Residues Arg201–Arg211 show a composition bias toward polar residues. Residues Ser212–Pro227 are compositionally biased toward low complexity. Composition is skewed to polar residues over residues Pro285 to Met301 and Met394 to His410. The NR LBD domain maps to Ala516–Lys753.

Belongs to the nuclear hormone receptor family. In terms of assembly, interacts with din-1 isoform d. As to expression, expressed throughout muscles of the pharynx. Expressed in epidermal seam cells, the vulva, head neurons, mature spermatheca, uterus and intestine.

The protein resides in the nucleus. Nuclear receptor which binds directly to response elements in target gene promoters. Activity is modulated by binding of steroid hormone ligands that include dafachronic acids. Regulates expression of genes involved in postembryonic development and the dauer diapause, in response to environmental cues. Inhibits the expression of let-7 family members when bound to corepressor din-1s which is an isoform of din-1. Plays a role in controlling the timing of seam cell development during the larval stages. Has a role in the immune response to bacterial infection, via regulation of let-7 miRNAs. Controls expression of genes that promote the aerobic catabolism of fatty acids for reproductive growth. May be involved in thermotolerance. The chain is Nuclear hormone receptor family member daf-12 from Caenorhabditis elegans.